A 1043-amino-acid chain; its full sequence is Glutamate receptor ionotropic, NMDA 3B (1043 aa).

The signal sequence occupies residues 1 to 22 (MEFVRALWLGLALALGPGSAGG). The Extracellular segment spans residues 23–574 (HPQPCGVLAR…PIGAFMWPLH (552 aa)). N-linked (GlcNAc...) asparagine glycans are attached at residues asparagine 69, asparagine 344, asparagine 451, and asparagine 465. Intrachain disulfides connect cysteine 439–cysteine 475 and cysteine 445–cysteine 476. Residues serine 531, serine 533, and arginine 538 each coordinate glycine. D-serine contacts are provided by serine 533 and arginine 538. Residues 575 to 594 (WSTWLGVFAALHLTALFLTV) form a helical membrane-spanning segment. Over 595 to 615 (YEWRSPYGLTPRGRNRSTVFS) the chain is Cytoplasmic. Residues 616–627 (YSSALNLCYAIL) constitute an intramembrane region (discontinuously helical). Residues 628–641 (FRRTVSSKTPKCPT) lie on the Cytoplasmic side of the membrane. A helical membrane pass occupies residues 642 to 661 (GRLLMNLWAIFCLLVLSSYT). The Extracellular segment spans residues 662 to 832 (ANLAAVMVGD…TLQMSIYHFA (171 aa)). Residue serine 701 coordinates glycine. D-serine is bound by residues serine 701, alanine 702, and aspartate 745. Aspartate 745 is a binding site for glycine. A glycan (N-linked (GlcNAc...) asparagine) is linked at asparagine 786. The helical transmembrane segment at 833 to 848 (GLFVLLCLGLGSALLS) threads the bilayer. The Cytoplasmic segment spans residues 849 to 1043 (SLGEHAFFRL…PHSGRPGSQE (195 aa)). Disordered regions lie at residues 882–924 (ALNT…WKRA) and 1012–1043 (GDSA…GSQE). Residues 979–1012 (QPGELQELERRIEVARERLRQALVRRGQLLAQLG) are involved in the trafficking and surface expression of NMDARs. A compositionally biased stretch (low complexity) spans 1024–1035 (QARAAPAEAPPH).

This sequence belongs to the glutamate-gated ion channel (TC 1.A.10.1) family. NR3B/GRIN3B subfamily. Forms heterotetrameric channels that contain at least two GluN1 subunits and at least a combination of one GluN2 and one GluN3 subunits (in vitro). Forms heterotetrameric channels composed of two GluN1/zeta subunits (GRIN1), and two identical GluN3 subunits (GRIN3A or GRIN3B) (in vitro). Does not form functional homomeric channels.

The protein resides in the cell membrane. The protein localises to the postsynaptic cell membrane. The catalysed reaction is Ca(2+)(in) = Ca(2+)(out). It carries out the reaction Na(+)(in) = Na(+)(out). In terms of biological role, component of a non-conventional N-methyl-D-aspartate (NMDA) receptors (NMDARs) that function as heterotetrameric, ligand-gated cation channels with low calcium permeability and low voltage-dependent block by Mg(2+). Forms glutamatergic receptor complexes with GluN1 and GluN2 subunits which are activated by glycine binding to the GluN1 and GluN3 subunits and L-glutamate binding to GluN2 subunits. Forms excitatory glycinergic receptor complexes with GluN1 alone which are activated by glycine binding to the GluN1 and GluN3 subunits. GluN3B subunit also binds D-serine and, in the absence of glycine, activates glycinergic receptor complexes, but with lower efficacy than glycine. Each GluN3 subunit confers differential attributes to channel properties, including activation, deactivation and desensitization kinetics, pH sensitivity, Ca2(+) permeability, and binding to allosteric modulators. In Homo sapiens (Human), this protein is Glutamate receptor ionotropic, NMDA 3B.